Consider the following 25-residue polypeptide: Antithrombin-III (25 aa).

It belongs to the serpin family. In terms of assembly, forms protease inhibiting heterodimer with TMPRSS7. Post-translationally, phosphorylated by FAM20C in the extracellular medium. As to expression, plasma.

The protein resides in the secreted. The protein localises to the extracellular space. Most important serine protease inhibitor in plasma that regulates the blood coagulation cascade. AT-III inhibits thrombin, matriptase-3/TMPRSS7, as well as factors IXa, Xa and XIa. Its inhibitory activity is greatly enhanced in the presence of heparin. The chain is Antithrombin-III (SERPINC1) from Mesocricetus auratus (Golden hamster).